The sequence spans 144 residues: uncharacterized protein (144 aa).

The next 4 membrane-spanning stretches (helical) occupy residues 7–29 (FPAS…RDLV), 51–73 (VAIG…FLLV), 85–107 (AVLA…VGAF), and 122–139 (HLHH…LIFV).

The protein localises to the cell membrane. This is an uncharacterized protein from Treponema pallidum (strain Nichols).